The chain runs to 192 residues: Dynein axonemal light chain 1 (192 aa).

LRR repeat units lie at residues Asn49 to Lys70, Tyr71 to Gly92, Thr94 to Lys115, and Lys116 to Gly137. The 43-residue stretch at Asn150–Ser192 folds into the LRRCT domain.

The protein belongs to the dynein light chain LC1-type family. In terms of assembly, interacts with DNAH5, a outer arm dynein heavy chain. Interacts with tubulin located within the A-tubule of the outer doublets in a ATP-independent manner.

It is found in the cytoplasm. Its subcellular location is the cytoskeleton. The protein resides in the cilium axoneme. Functionally, part of the multisubunit axonemal ATPase complexes that generate the force for cilia motility and govern beat frequency. Component of the outer arm dynein (ODA). May be involved in a mechanosensory feedback mechanism controlling ODA activity based on external conformational cues by tethering the outer arm dynein heavy chain (DNAH5) to the microtubule within the axoneme. The polypeptide is Dynein axonemal light chain 1 (dnal1) (Xenopus laevis (African clawed frog)).